The sequence spans 205 residues: Thiamine-phosphate synthase (205 aa).

4-amino-2-methyl-5-(diphosphooxymethyl)pyrimidine is bound by residues 34–38 (QLRCK) and Asn66. Mg(2+) contacts are provided by Asp67 and Asp86. Ser105 contacts 4-amino-2-methyl-5-(diphosphooxymethyl)pyrimidine. Residue 131–133 (TTT) participates in 2-[(2R,5Z)-2-carboxy-4-methylthiazol-5(2H)-ylidene]ethyl phosphate binding. A 4-amino-2-methyl-5-(diphosphooxymethyl)pyrimidine-binding site is contributed by Lys134. Residue Gly163 coordinates 2-[(2R,5Z)-2-carboxy-4-methylthiazol-5(2H)-ylidene]ethyl phosphate.

This sequence belongs to the thiamine-phosphate synthase family. Mg(2+) serves as cofactor.

It catalyses the reaction 2-[(2R,5Z)-2-carboxy-4-methylthiazol-5(2H)-ylidene]ethyl phosphate + 4-amino-2-methyl-5-(diphosphooxymethyl)pyrimidine + 2 H(+) = thiamine phosphate + CO2 + diphosphate. It carries out the reaction 2-(2-carboxy-4-methylthiazol-5-yl)ethyl phosphate + 4-amino-2-methyl-5-(diphosphooxymethyl)pyrimidine + 2 H(+) = thiamine phosphate + CO2 + diphosphate. The catalysed reaction is 4-methyl-5-(2-phosphooxyethyl)-thiazole + 4-amino-2-methyl-5-(diphosphooxymethyl)pyrimidine + H(+) = thiamine phosphate + diphosphate. The protein operates within cofactor biosynthesis; thiamine diphosphate biosynthesis; thiamine phosphate from 4-amino-2-methyl-5-diphosphomethylpyrimidine and 4-methyl-5-(2-phosphoethyl)-thiazole: step 1/1. Condenses 4-methyl-5-(beta-hydroxyethyl)thiazole monophosphate (THZ-P) and 2-methyl-4-amino-5-hydroxymethyl pyrimidine pyrophosphate (HMP-PP) to form thiamine monophosphate (TMP). This chain is Thiamine-phosphate synthase, found in Neisseria gonorrhoeae (strain ATCC 700825 / FA 1090).